The chain runs to 218 residues: Glutathione S-transferase Y1 (218 aa).

Residues Pro-2–Gly-88 enclose the GST N-terminal domain. Glutathione is bound by residues Tyr-7–Trp-8, Trp-46–Lys-50, Asn-59–Leu-60, and Gln-72–Ser-73. The 119-residue stretch at Thr-90–Ile-208 folds into the GST C-terminal domain. Tyr-116 contributes to the substrate binding site.

The protein belongs to the GST superfamily. Mu family. Homodimer.

The protein resides in the cytoplasm. The enzyme catalyses RX + glutathione = an S-substituted glutathione + a halide anion + H(+). Functionally, conjugation of reduced glutathione to a wide number of exogenous and endogenous hydrophobic electrophiles. The polypeptide is Glutathione S-transferase Y1 (Cricetulus longicaudatus (Long-tailed dwarf hamster)).